The chain runs to 318 residues: Protoheme IX farnesyltransferase (318 aa).

9 helical membrane passes run 37–57, 59–79, 108–128, 131–151, 158–178, 183–203, 216–238, 249–269, and 296–316; these read VMELLLVTTLPTMIFAARGLP, IWLILATMIGGAFAAGSAGAF, EALVFSWALGILSIAILWFGA, LAGLLGIAAIFFYVVVYTLIL, NIVWGGVAGCMPVLIAWAAVT, WPAIILFMVIFLWTPPHYWPL, VPMLGAVAGARIVSVQVVLYTWA, LGHACIVYTVVAGAAGLWFLL, and ISYLTLLFVALAVDPFVGMPL.

Belongs to the UbiA prenyltransferase family. Protoheme IX farnesyltransferase subfamily.

Its subcellular location is the cell membrane. The catalysed reaction is heme b + (2E,6E)-farnesyl diphosphate + H2O = Fe(II)-heme o + diphosphate. It participates in porphyrin-containing compound metabolism; heme O biosynthesis; heme O from protoheme: step 1/1. Functionally, converts heme B (protoheme IX) to heme O by substitution of the vinyl group on carbon 2 of heme B porphyrin ring with a hydroxyethyl farnesyl side group. This is Protoheme IX farnesyltransferase from Renibacterium salmoninarum (strain ATCC 33209 / DSM 20767 / JCM 11484 / NBRC 15589 / NCIMB 2235).